Consider the following 106-residue polypeptide: Pyrimidine/purine nucleoside phosphorylase (106 aa).

This sequence belongs to the nucleoside phosphorylase PpnP family.

It catalyses the reaction a purine D-ribonucleoside + phosphate = a purine nucleobase + alpha-D-ribose 1-phosphate. The catalysed reaction is adenosine + phosphate = alpha-D-ribose 1-phosphate + adenine. It carries out the reaction cytidine + phosphate = cytosine + alpha-D-ribose 1-phosphate. The enzyme catalyses guanosine + phosphate = alpha-D-ribose 1-phosphate + guanine. It catalyses the reaction inosine + phosphate = alpha-D-ribose 1-phosphate + hypoxanthine. The catalysed reaction is thymidine + phosphate = 2-deoxy-alpha-D-ribose 1-phosphate + thymine. It carries out the reaction uridine + phosphate = alpha-D-ribose 1-phosphate + uracil. The enzyme catalyses xanthosine + phosphate = alpha-D-ribose 1-phosphate + xanthine. In terms of biological role, catalyzes the phosphorolysis of diverse nucleosides, yielding D-ribose 1-phosphate and the respective free bases. Can use uridine, adenosine, guanosine, cytidine, thymidine, inosine and xanthosine as substrates. Also catalyzes the reverse reactions. The protein is Pyrimidine/purine nucleoside phosphorylase of Burkholderia vietnamiensis (strain G4 / LMG 22486) (Burkholderia cepacia (strain R1808)).